A 288-amino-acid chain; its full sequence is tRNA pseudouridine synthase A (288 aa).

Asp58 functions as the Nucleophile in the catalytic mechanism. Tyr124 contacts substrate.

This sequence belongs to the tRNA pseudouridine synthase TruA family. In terms of assembly, homodimer.

It carries out the reaction uridine(38/39/40) in tRNA = pseudouridine(38/39/40) in tRNA. Its function is as follows. Formation of pseudouridine at positions 38, 39 and 40 in the anticodon stem and loop of transfer RNAs. This Corynebacterium diphtheriae (strain ATCC 700971 / NCTC 13129 / Biotype gravis) protein is tRNA pseudouridine synthase A.